A 371-amino-acid chain; its full sequence is Phospholipid-transporting ATPase accessory subunit ivn1 (371 aa).

Residues Met-1–Thr-39 are Cytoplasmic-facing. Residues Val-40–Val-60 traverse the membrane as a helical segment. Residues Ala-61–Asn-325 are Extracellular-facing. 2 disulfide bridges follow: Cys-75–Cys-111 and Cys-166–Cys-181. An N-linked (GlcNAc...) asparagine glycan is attached at Asn-99. N-linked (GlcNAc...) asparagine glycosylation is found at Asn-190, Asn-212, Asn-216, Asn-233, Asn-284, and Asn-297. The helical transmembrane segment at Tyr-326–Leu-346 threads the bilayer. Over Ser-347–Ser-371 the chain is Cytoplasmic.

This sequence belongs to the CDC50/LEM3 family.

It localises to the endoplasmic reticulum membrane. Functionally, accessory component of a P4-ATPase flippase complex which catalyzes the hydrolysis of ATP coupled to the transport of aminophospholipids from the lumenal to the cytosolic leaflet of membranes and ensures the maintenance of asymmetric distribution of phospholipids. This is Phospholipid-transporting ATPase accessory subunit ivn1 (ivn1) from Schizosaccharomyces pombe (strain 972 / ATCC 24843) (Fission yeast).